A 277-amino-acid chain; its full sequence is Hydroxyethylthiazole kinase (277 aa).

Met55 lines the substrate pocket. Residues Arg130 and Ser176 each contribute to the ATP site. Substrate is bound at residue Gly203.

It belongs to the Thz kinase family. Mg(2+) is required as a cofactor.

It carries out the reaction 5-(2-hydroxyethyl)-4-methylthiazole + ATP = 4-methyl-5-(2-phosphooxyethyl)-thiazole + ADP + H(+). It functions in the pathway cofactor biosynthesis; thiamine diphosphate biosynthesis; 4-methyl-5-(2-phosphoethyl)-thiazole from 5-(2-hydroxyethyl)-4-methylthiazole: step 1/1. Functionally, catalyzes the phosphorylation of the hydroxyl group of 4-methyl-5-beta-hydroxyethylthiazole (THZ). The polypeptide is Hydroxyethylthiazole kinase (Cutibacterium acnes (strain DSM 16379 / KPA171202) (Propionibacterium acnes)).